Here is a 179-residue protein sequence, read N- to C-terminus: Large ribosomal subunit protein uL5 (179 aa).

The protein belongs to the universal ribosomal protein uL5 family. Part of the 50S ribosomal subunit; part of the 5S rRNA/L5/L18/L25 subcomplex. Contacts the 5S rRNA and the P site tRNA. Forms a bridge to the 30S subunit in the 70S ribosome.

Its function is as follows. This is one of the proteins that bind and probably mediate the attachment of the 5S RNA into the large ribosomal subunit, where it forms part of the central protuberance. In the 70S ribosome it contacts protein S13 of the 30S subunit (bridge B1b), connecting the 2 subunits; this bridge is implicated in subunit movement. Contacts the P site tRNA; the 5S rRNA and some of its associated proteins might help stabilize positioning of ribosome-bound tRNAs. The chain is Large ribosomal subunit protein uL5 from Geotalea uraniireducens (strain Rf4) (Geobacter uraniireducens).